A 535-amino-acid polypeptide reads, in one-letter code: Estrogen receptor (535 aa).

Residues 1–21 (SRMLTDPPRIGSMQSLGSSPT) are disordered. A modulating region spans residues 1 to 104 (SRMLTDPPRI…VFEMANETRY (104 aa)). A compositionally biased stretch (polar residues) spans 12 to 21 (SMQSLGSSPT). 2 consecutive NR C4-type zinc fingers follow at residues 105–125 (CAVC…CEGC) and 141–165 (CPAT…LRKC). A DNA-binding region (nuclear receptor) is located at residues 105 to 170 (CAVCSDFASG…RLRKCYEVGM (66 aa)). Positions 171-236 (VKGGLRKDRG…GGWCGPRITM (66 aa)) are hinge. The segment at 187-229 (DKRYCGPAGDREKPYGDLEHRTAPPQDGGRNSSSSSLSGGGGW) is disordered. A compositionally biased stretch (basic and acidic residues) spans 195 to 208 (GDREKPYGDLEHRT). Residues 214–223 (GGRNSSSSSL) show a composition bias toward low complexity. The NR LBD domain maps to 237 to 473 (PPEQVLFLLQ…DLLLEMLDGH (237 aa)). A disordered region spans residues 478-535 (PGKVAQAGEQTEGPSTTTTTSTGSSIGPMRGSQDTHIRSPGSGVLQYGSPSSDQMPIP). The segment covering 492 to 502 (STTTTTSTGSS) has biased composition (low complexity). Positions 525–535 (GSPSSDQMPIP) are enriched in polar residues.

This sequence belongs to the nuclear hormone receptor family. NR3 subfamily. Binds DNA as a homodimer. Can form a heterodimer with ER-beta. In terms of tissue distribution, highest expression in brain and liver.

It is found in the nucleus. Its function is as follows. The steroid hormones and their receptors are involved in the regulation of eukaryotic gene expression and affect cellular proliferation and differentiation in target tissues. The protein is Estrogen receptor (esr1) of Salmo salar (Atlantic salmon).